A 362-amino-acid polypeptide reads, in one-letter code: Chorismate synthase (362 aa).

NADP(+) is bound at residue Arg47. Residues 124–126 (RSS), Gly286, 301–305 (KPTAT), and Arg327 contribute to the FMN site.

This sequence belongs to the chorismate synthase family. As to quaternary structure, homotetramer. Requires FMNH2 as cofactor.

The catalysed reaction is 5-O-(1-carboxyvinyl)-3-phosphoshikimate = chorismate + phosphate. The protein operates within metabolic intermediate biosynthesis; chorismate biosynthesis; chorismate from D-erythrose 4-phosphate and phosphoenolpyruvate: step 7/7. Its function is as follows. Catalyzes the anti-1,4-elimination of the C-3 phosphate and the C-6 proR hydrogen from 5-enolpyruvylshikimate-3-phosphate (EPSP) to yield chorismate, which is the branch point compound that serves as the starting substrate for the three terminal pathways of aromatic amino acid biosynthesis. This reaction introduces a second double bond into the aromatic ring system. This Rippkaea orientalis (strain PCC 8801 / RF-1) (Cyanothece sp. (strain PCC 8801)) protein is Chorismate synthase.